Here is a 53-residue protein sequence, read N- to C-terminus: ATP synthase protein 8 (53 aa).

The helical transmembrane segment at 10-30 (IMVFLVSMALLWAIMTMVFFL) threads the bilayer.

The protein belongs to the ATPase protein 8 family. As to quaternary structure, F-type ATPases have 2 components, CF(1) - the catalytic core - and CF(0) - the membrane proton channel.

Its subcellular location is the mitochondrion membrane. In terms of biological role, mitochondrial membrane ATP synthase (F(1)F(0) ATP synthase or Complex V) produces ATP from ADP in the presence of a proton gradient across the membrane which is generated by electron transport complexes of the respiratory chain. F-type ATPases consist of two structural domains, F(1) - containing the extramembraneous catalytic core and F(0) - containing the membrane proton channel, linked together by a central stalk and a peripheral stalk. During catalysis, ATP synthesis in the catalytic domain of F(1) is coupled via a rotary mechanism of the central stalk subunits to proton translocation. Part of the complex F(0) domain. Minor subunit located with subunit a in the membrane. The protein is ATP synthase protein 8 (MT-ATP8) of Artemia franciscana (Brine shrimp).